Consider the following 196-residue polypeptide: Putative NADH dehydrogenase/NAD(P)H nitroreductase PST_3601 (196 aa).

It belongs to the nitroreductase family. HadB/RutE subfamily. The cofactor is FMN.

The sequence is that of Putative NADH dehydrogenase/NAD(P)H nitroreductase PST_3601 from Stutzerimonas stutzeri (strain A1501) (Pseudomonas stutzeri).